We begin with the raw amino-acid sequence, 245 residues long: Ribonuclease 3 (245 aa).

The 130-residue stretch at 17–146 (FAKKMNELGF…FVGALYLDQG (130 aa)) folds into the RNase III domain. Glu-59 lines the Mg(2+) pocket. The active site involves Asp-63. Mg(2+) contacts are provided by Asp-132 and Glu-135. The active site involves Glu-135. The region spanning 172 to 241 (DFKTQFQEYV…AESAYSKLKS (70 aa)) is the DRBM domain. A disordered region spans residues 217–245 (ATGQGKTKKESEQKAAESAYSKLKSNNNL).

This sequence belongs to the ribonuclease III family. In terms of assembly, homodimer. Mg(2+) serves as cofactor.

The protein resides in the cytoplasm. The catalysed reaction is Endonucleolytic cleavage to 5'-phosphomonoester.. In terms of biological role, digests double-stranded RNA. Involved in the processing of primary rRNA transcript to yield the immediate precursors to the large and small rRNAs (23S and 16S). Processes some mRNAs, and tRNAs when they are encoded in the rRNA operon. Processes pre-crRNA and tracrRNA of type II CRISPR loci if present in the organism. The chain is Ribonuclease 3 from Staphylococcus haemolyticus (strain JCSC1435).